The primary structure comprises 675 residues: Protein PALS1 (675 aa).

Disordered regions lie at residues 1–34 (MTTS…KHRE) and 51–78 (RRSA…KKQE). The segment at 1–345 (MTTSHMNGHV…QQIKPPPAKE (345 aa)) is required for the correct localization of PALS1 and PATJ at cell-cell contacts and the normal formation of tight junctions and adherens junctions. 2 stretches are compositionally biased toward basic and acidic residues: residues 10-34 (VTEE…KHRE) and 54-78 (AQLE…KKQE). Ser-14 and Ser-25 each carry phosphoserine. The segment at 21-140 (VDLASPEEHQ…LKHIQHTLVD (120 aa)) is interaction with PARD6B. Phosphoserine is present on residues Ser-83 and Ser-84. L27 domains lie at 120 to 177 (KILE…NKAS) and 179 to 235 (PFPL…MQLE). The tract at residues 181–243 (PLISNAQDLA…LEPITDERVY (63 aa)) is interaction with LIN7C. In terms of domain architecture, PDZ spans 256–336 (IVRIEKARDI…TLTFVLIPSQ (81 aa)). Residues 345–417 (ETVIHVKAHF…PGKSFQQQRE (73 aa)) form the SH3 domain. Residues 479 to 660 (KRPIILIGPQ…AYQELLRLIN (182 aa)) enclose the Guanylate kinase-like domain. Residue 486-493 (GPQNCGQN) participates in ATP binding.

The protein belongs to the MAGUK family. As to quaternary structure, heterodimer with MPP1. Forms a heterotrimeric complex composed of PALS1, LIN7B and PATJ; the N-terminal L27 domain of PALS1 interacts with the L27 domain of PATJ and the C-terminal L27 domain of PALS1 interacts with the L27 domain of LIN7B. Component of a complex composed of PALS1, CRB1 and MPP4. Component of a complex whose core is composed of ARHGAP17, AMOT, PALS1, PATJ and PARD3/PAR3. Component of a complex composed of PALS1, CRB1 and EPB41L5. Within the complex, interacts (via HOOK domain) with EPB41L5 (via FERM domain), and interacts with CRB1 (via intracellular domain). Component of a complex composed of PALS1, MPP3 and CRB1; PALS1 acts as a bridging protein between MPP3 (via guanylate kinase-like domain) and CRB1. Component of a complex composed of CRB3, PALS1 and PATJ. As part of the Crumbs complex; interacts with WWP1, the interaction is enhanced by AMOTL2 and facilitates WWP1 localization to the plasma membrane. The Crumbs complex promotes monoubiquitination of AMOTL2 by WWP1, which activates the Hippo signaling pathway. Interacts (via PDZ domain) with PATJ (via N-terminus). Interacts with EZR. Interacts (via PDZ domain) with CRB1 (via C-terminal ERLI motif). While the PDZ domain is sufficient for interaction with CRB1, the adjacent SH3 and guanylate kinase-like domains are likely to contribute to a high affinity interaction. Interacts with WWTR1/TAZ (via WW domain). Interacts with MPP7. Interacts (via PDZ domain) with CRB3 (via C-terminus). Interacts with LIN7C. Interacts with MPDZ. Interacts with PARD6B. Interacts with SC6A1. Interacts with CDH5; the interaction promotes PALS1 localization to cell junctions and is required for CDH5-mediated vascular lumen formation and endothelial cell. Interacts with NPHP1 (via coiled coil and SH3 domains). Interacts with NPHP4. Interacts with CRB2. In terms of assembly, (Microbial infection) Interacts (via PDZ domain) with human coronaviruses SARS-CoV and, probably, SARS-CoV-2 envelope small membrane protein E (via C-terminus); this inhibits the interaction between PALS1 and CRB3. Expressed at the outer limiting membrane in the retina (at protein level). Expressed in T lymphocytes (at protein level). Expressed in the kidney (at protein level).

Its subcellular location is the golgi apparatus. The protein localises to the cell membrane. It localises to the endomembrane system. The protein resides in the cell junction. It is found in the tight junction. Its subcellular location is the adherens junction. The protein localises to the cell projection. It localises to the axon. The protein resides in the perikaryon. It is found in the apical cell membrane. Its subcellular location is the endoplasmic reticulum-Golgi intermediate compartment. Functionally, plays a role in tight junction biogenesis and in the establishment of cell polarity in epithelial cells. Also involved in adherens junction biogenesis by ensuring correct localization of the exocyst complex protein EXOC4/SEC8 which allows trafficking of adherens junction structural component CDH1 to the cell surface. Plays a role through its interaction with CDH5 in vascular lumen formation and endothelial membrane polarity. Required during embryonic and postnatal retinal development. Required for the maintenance of cerebellar progenitor cells in an undifferentiated proliferative state, preventing premature differentiation, and is required for cerebellar histogenesis, fissure formation, cerebellar layer organization and cortical development. Plays a role in neuronal progenitor cell survival, potentially via promotion of mTOR signaling. Plays a role in the radial and longitudinal extension of the myelin sheath in Schwann cells. May modulate SC6A1/GAT1-mediated GABA uptake by stabilizing the transporter. Plays a role in the T-cell receptor-mediated activation of NF-kappa-B. Required for localization of EZR to the apical membrane of parietal cells and may play a role in the dynamic remodeling of the apical cytoskeleton. Required for the normal polarized localization of the vesicular marker STX4. Required for the correct trafficking of the myelin proteins PMP22 and MAG. Involved in promoting phosphorylation and cytoplasmic retention of transcriptional coactivators YAP1 and WWTR1/TAZ which leads to suppression of TGFB1-dependent transcription of target genes such as CCN2/CTGF, SERPINE1/PAI1, SNAI1/SNAIL1 and SMAD7. (Microbial infection) Acts as an interaction partner for human coronaviruses SARS-CoV and, probably, SARS-CoV-2 envelope protein E which results in delayed formation of tight junctions and disregulation of cell polarity. This is Protein PALS1 from Homo sapiens (Human).